The sequence spans 375 residues: 23S rRNA (uracil(747)-C(5))-methyltransferase RlmC (375 aa).

4 residues coordinate [4Fe-4S] cluster: cysteine 3, cysteine 11, cysteine 14, and cysteine 87. S-adenosyl-L-methionine is bound by residues glutamine 212, phenylalanine 241, glutamate 262, and asparagine 307. The active-site Nucleophile is the cysteine 334.

Belongs to the class I-like SAM-binding methyltransferase superfamily. RNA M5U methyltransferase family. RlmC subfamily.

The catalysed reaction is uridine(747) in 23S rRNA + S-adenosyl-L-methionine = 5-methyluridine(747) in 23S rRNA + S-adenosyl-L-homocysteine + H(+). Catalyzes the formation of 5-methyl-uridine at position 747 (m5U747) in 23S rRNA. This Escherichia coli (strain SMS-3-5 / SECEC) protein is 23S rRNA (uracil(747)-C(5))-methyltransferase RlmC.